The primary structure comprises 311 residues: Pseudouridine-5'-phosphate glycosidase (311 aa).

Glu32 functions as the Proton donor in the catalytic mechanism. The substrate site is built by Lys96 and Val116. Residue Asp148 participates in Mn(2+) binding. 150–152 (SAD) is a substrate binding site. Catalysis depends on Lys169, which acts as the Nucleophile.

Belongs to the pseudouridine-5'-phosphate glycosidase family. Homotrimer. Mn(2+) serves as cofactor.

It catalyses the reaction D-ribose 5-phosphate + uracil = psi-UMP + H2O. Its function is as follows. Catalyzes the reversible cleavage of pseudouridine 5'-phosphate (PsiMP) to ribose 5-phosphate and uracil. Functions biologically in the cleavage direction, as part of a pseudouridine degradation pathway. This is Pseudouridine-5'-phosphate glycosidase from Roseiflexus sp. (strain RS-1).